The chain runs to 206 residues: Cytochrome c biogenesis ATP-binding export protein CcmA (206 aa).

The ABC transporter domain occupies 3 to 206; the sequence is VSVDDLCVTR…LAGASDEAFL (204 aa). Position 35-42 (35-42) interacts with ATP; that stretch reads GPNGSGKT.

The protein belongs to the ABC transporter superfamily. CcmA exporter (TC 3.A.1.107) family. The complex is composed of two ATP-binding proteins (CcmA) and two transmembrane proteins (CcmB).

The protein localises to the cell inner membrane. The enzyme catalyses heme b(in) + ATP + H2O = heme b(out) + ADP + phosphate + H(+). Part of the ABC transporter complex CcmAB involved in the biogenesis of c-type cytochromes; once thought to export heme, this seems not to be the case, but its exact role is uncertain. Responsible for energy coupling to the transport system. The chain is Cytochrome c biogenesis ATP-binding export protein CcmA from Roseobacter denitrificans (strain ATCC 33942 / OCh 114) (Erythrobacter sp. (strain OCh 114)).